Here is a 901-residue protein sequence, read N- to C-terminus: Protein translocase subunit SecA (901 aa).

ATP-binding positions include glutamine 87, 105 to 109 (GEGKT), and aspartate 512. A disordered region spans residues 852–901 (AQMQQLSHQSDDEAAAEDLAAQTGERKVGRNDPCPCGSGKKYKQCHGRLS). 4 residues coordinate Zn(2+): cysteine 885, cysteine 887, cysteine 896, and histidine 897. Basic residues predominate over residues 891–901 (KKYKQCHGRLS).

Belongs to the SecA family. Monomer and homodimer. Part of the essential Sec protein translocation apparatus which comprises SecA, SecYEG and auxiliary proteins SecDF-YajC and YidC. Zn(2+) serves as cofactor.

Its subcellular location is the cell inner membrane. It localises to the cytoplasm. It carries out the reaction ATP + H2O + cellular proteinSide 1 = ADP + phosphate + cellular proteinSide 2.. Functionally, part of the Sec protein translocase complex. Interacts with the SecYEG preprotein conducting channel. Has a central role in coupling the hydrolysis of ATP to the transfer of proteins into and across the cell membrane, serving both as a receptor for the preprotein-SecB complex and as an ATP-driven molecular motor driving the stepwise translocation of polypeptide chains across the membrane. The polypeptide is Protein translocase subunit SecA (Klebsiella pneumoniae (strain 342)).